A 168-amino-acid chain; its full sequence is Mediator of RNA polymerase II transcription subunit 31 (168 aa).

The segment covering 113 to 159 (EGEDQDVEESEEETVENEQKESEDEEDVVIVEKPEDEQEEQAEEAAE) has biased composition (acidic residues). Positions 113 to 168 (EGEDQDVEESEEETVENEQKESEDEEDVVIVEKPEDEQEEQAEEAAEPTDTSLLNT) are disordered.

It belongs to the Mediator complex subunit 31 family. In terms of assembly, component of the Mediator complex.

The protein resides in the nucleus. Functionally, component of the Mediator complex, a coactivator involved in the regulated transcription of nearly all RNA polymerase II-dependent genes. Mediator functions as a bridge to convey information from gene-specific regulatory proteins to the basal RNA polymerase II transcription machinery. Mediator is recruited to promoters by direct interactions with regulatory proteins and serves as a scaffold for the assembly of a functional preinitiation complex with RNA polymerase II and the general transcription factors. The chain is Mediator of RNA polymerase II transcription subunit 31 (mdt-31) from Caenorhabditis briggsae.